We begin with the raw amino-acid sequence, 130 residues long: Protein ApaG (130 aa).

An ApaG domain is found at 3-127 (RAVTRNIEVQ…FSLDLPGTRR (125 aa)).

In Mesorhizobium japonicum (strain LMG 29417 / CECT 9101 / MAFF 303099) (Mesorhizobium loti (strain MAFF 303099)), this protein is Protein ApaG.